The chain runs to 266 residues: Undecaprenyl-diphosphatase (266 aa).

8 consecutive transmembrane segments (helical) span residues 4-24 (LATI…PVSS), 41-61 (GSAA…LVAY), 79-99 (AVAF…VGAV), 108-128 (LESP…ILAI), 143-163 (MPLR…IPGV), 184-204 (AEFS…YSLW), 220-240 (IGLF…VAIV), and 243-263 (FGFA…LLWL).

This sequence belongs to the UppP family.

The protein localises to the cell inner membrane. It carries out the reaction di-trans,octa-cis-undecaprenyl diphosphate + H2O = di-trans,octa-cis-undecaprenyl phosphate + phosphate + H(+). In terms of biological role, catalyzes the dephosphorylation of undecaprenyl diphosphate (UPP). Confers resistance to bacitracin. In Sphingopyxis alaskensis (strain DSM 13593 / LMG 18877 / RB2256) (Sphingomonas alaskensis), this protein is Undecaprenyl-diphosphatase.